We begin with the raw amino-acid sequence, 614 residues long: Phragmoplastin DRP1C (614 aa).

A Dynamin-type G domain is found at 32-301 (WEALPTVAVV…LETVIRQKIP (270 aa)). The segment at 42-49 (GGQSSGKS) is G1 motif. Position 45–50 (45–50 (SSGKSS)) interacts with GTP. Residues 68–70 (VTR) form a G2 motif region. The segment at 143 to 146 (DLPG) is G3 motif. The G4 motif stretch occupies residues 212-215 (TKLD). GTP-binding positions include 213–218 (KLDIMD) and 243–246 (NRSQ). The interval 242–245 (VNRS) is G5 motif. The disordered stretch occupies residues 499-519 (EPEKEKPNPRNAPAPNADPYS). Positions 507-517 (PRNAPAPNADP) are enriched in low complexity. One can recognise a GED domain in the interval 523 to 614 (FRKIGSNVSA…RDDIDAVAWK (92 aa)).

This sequence belongs to the TRAFAC class dynamin-like GTPase superfamily. Dynamin/Fzo/YdjA family. Forms homodimer and may homooligomerize and heterooligomerize to form the phragmoplastin complex. Binds to PHIP1. As to expression, ubiquitous.

It is found in the cytoplasm. Its subcellular location is the cytoskeleton. The protein localises to the cell cortex. The protein resides in the cytoplasmic vesicle. It localises to the clathrin-coated vesicle. It is found in the phragmoplast. The catalysed reaction is GTP + H2O = GDP + phosphate + H(+). Microtubule-associated force-producing protein that is targeted to the growing edges of the cell plate during cytokinesis. Also plays a major role in plasma membrane maintenance during pollen maturation. Has a GTPase activity. The chain is Phragmoplastin DRP1C from Arabidopsis thaliana (Mouse-ear cress).